Reading from the N-terminus, the 185-residue chain is Small ribosomal subunit protein uS5 (185 aa).

In terms of domain architecture, S5 DRBM spans 29–92; the sequence is LEEKVVKINR…EKAKKQLVRI (64 aa).

It belongs to the universal ribosomal protein uS5 family. In terms of assembly, part of the 30S ribosomal subunit. Contacts proteins S4 and S8.

Its function is as follows. With S4 and S12 plays an important role in translational accuracy. Located at the back of the 30S subunit body where it stabilizes the conformation of the head with respect to the body. In Aster yellows witches'-broom phytoplasma (strain AYWB), this protein is Small ribosomal subunit protein uS5.